The following is a 393-amino-acid chain: Purine permease 14 (393 aa).

N-acetylalanine is present on alanine 2. Helical transmembrane passes span 46–66 (WPTI…AKLL), 90–110 (TQSL…LIFI), 133–153 (LAVI…LAAM), 161–181 (GVFT…AAFI), 189–209 (WVVI…SSSF), 225–245 (WAAL…QNVF), 268–288 (VIIF…LIAG), 308–328 (VMAM…IVGL), 339–359 (VISV…FNFM), and 363–383 (FDAF…AYFF).

The protein belongs to the purine permeases (TC 2.A.7.14) family. In terms of tissue distribution, expressed in seedlings, leaves, embryos, ovules, seeds and the root and shoot meristems. In heart-stage embryos, detected in cells that failed to respond to cytokinins, including the prospective cotyledons.

It localises to the cell membrane. Purine permease implicated in ATP-dependent cytokinin translocation that controls the spatiotemporal landscape of cytokinin signaling. Depletes ligands from the apoplast, which leads to a suppression of the cytokinin response. This Arabidopsis thaliana (Mouse-ear cress) protein is Purine permease 14.